A 604-amino-acid chain; its full sequence is Polycomb group protein EMF2B (604 aa).

The C2H2-type zinc finger occupies 310 to 331; sequence CPFCLVPCGSFKGLGCHLNASH. The tract at residues 396–440 is disordered; sequence PHIVDSGSPEDAQAGSEDDYVQRENGSSVAHASVDPANSLHGSNL. The tract at residues 454 to 589 is VEFS-box; it reads LSVERADPRN…DARAMNACNT (136 aa).

It belongs to the VEFS (VRN2-EMF2-FIS2-SU(Z)12) family. In terms of assembly, component of the polycomb repressive complex 2 (PRC2), composed of the core PRC2 components FIE2, EZ1 and CLF. PRC2 methylates 'Lys-27' residues of histone H3 (H3K27me3), leading to transcriptional repression of the affected target gene. As to expression, widely expressed.

Polycomb group (PcG) protein. PcG proteins act by forming multiprotein complexes, which are required to maintain the transcriptionally repressive state of homeotic genes throughout development. PcG proteins are not required to initiate repression, but to maintain it during later stages of development. They act via the methylation of histones, rendering chromatin heritably changed in its expressibility. Polycomb group (PcG) protein involved in the repression of flowering under long day (LD) conditions. Regulates floret development. The protein is Polycomb group protein EMF2B of Oryza sativa subsp. japonica (Rice).